A 198-amino-acid chain; its full sequence is Phosphoheptose isomerase (198 aa).

One can recognise an SIS domain in the interval 36-198; the sequence is MIGSLLNNGK…DCLLLGVEDQ (163 aa). Residue 51–53 participates in substrate binding; sequence NGG. The Zn(2+) site is built by His60 and Glu64. Substrate contacts are provided by residues Glu64, 93–94, 119–121, Ser124, and Gln174; these read ND and STS. The Zn(2+) site is built by Gln174 and His182.

It belongs to the SIS family. GmhA subfamily. As to quaternary structure, homotetramer. It depends on Zn(2+) as a cofactor.

It is found in the cytoplasm. It catalyses the reaction 2 D-sedoheptulose 7-phosphate = D-glycero-alpha-D-manno-heptose 7-phosphate + D-glycero-beta-D-manno-heptose 7-phosphate. It functions in the pathway carbohydrate biosynthesis; D-glycero-D-manno-heptose 7-phosphate biosynthesis; D-glycero-alpha-D-manno-heptose 7-phosphate and D-glycero-beta-D-manno-heptose 7-phosphate from sedoheptulose 7-phosphate: step 1/1. Its function is as follows. Catalyzes the isomerization of sedoheptulose 7-phosphate in D-glycero-D-manno-heptose 7-phosphate. This is Phosphoheptose isomerase from Aromatoleum aromaticum (strain DSM 19018 / LMG 30748 / EbN1) (Azoarcus sp. (strain EbN1)).